Here is a 123-residue protein sequence, read N- to C-terminus: Large ribosomal subunit protein bL12 (123 aa).

The protein belongs to the bacterial ribosomal protein bL12 family. In terms of assembly, homodimer. Part of the ribosomal stalk of the 50S ribosomal subunit. Forms a multimeric L10(L12)X complex, where L10 forms an elongated spine to which 2 to 4 L12 dimers bind in a sequential fashion. Binds GTP-bound translation factors.

Functionally, forms part of the ribosomal stalk which helps the ribosome interact with GTP-bound translation factors. Is thus essential for accurate translation. This Bartonella bacilliformis (strain ATCC 35685 / KC583 / Herrer 020/F12,63) protein is Large ribosomal subunit protein bL12.